Consider the following 292-residue polypeptide: Elongation factor Ts (292 aa).

An involved in Mg(2+) ion dislocation from EF-Tu region spans residues 80-83 (TDFV).

The protein belongs to the EF-Ts family.

It is found in the cytoplasm. Its function is as follows. Associates with the EF-Tu.GDP complex and induces the exchange of GDP to GTP. It remains bound to the aminoacyl-tRNA.EF-Tu.GTP complex up to the GTP hydrolysis stage on the ribosome. This Ralstonia nicotianae (strain ATCC BAA-1114 / GMI1000) (Ralstonia solanacearum) protein is Elongation factor Ts.